The primary structure comprises 667 residues: Protein adenylyltransferase SelO, mitochondrial (667 aa).

The transit peptide at 1–6 directs the protein to the mitochondrion; that stretch reads MASVRA. ATP is bound by residues Gly-154, Gly-156, Lys-177, Asp-189, Gly-190, Arg-247, and Arg-254. Asp-341 acts as the Proton acceptor in catalysis. Positions 342 and 351 each coordinate Mg(2+). An ATP-binding site is contributed by Asp-351. Residues 628–652 form a disordered region; that stretch reads YHSEEEATGPEAVARSTEEQSSYSN. Thr-635 carries the phosphothreonine modification. Phosphoserine is present on Ser-651. A non-standard amino acid (selenocysteine) is located at residue Sec-665.

It belongs to the SELO family. Mg(2+) is required as a cofactor.

The protein localises to the mitochondrion. The catalysed reaction is L-tyrosyl-[protein] + ATP = O-(5'-adenylyl)-L-tyrosyl-[protein] + diphosphate. The enzyme catalyses L-threonyl-[protein] + ATP = 3-O-(5'-adenylyl)-L-threonyl-[protein] + diphosphate. It catalyses the reaction L-seryl-[protein] + ATP = 3-O-(5'-adenylyl)-L-seryl-[protein] + diphosphate. Its function is as follows. Catalyzes the transfer of adenosine 5'-monophosphate (AMP) to Ser, Thr and Tyr residues of target proteins (AMPylation). May be a redox-active mitochondrial selenoprotein which interacts with a redox target protein. The polypeptide is Protein adenylyltransferase SelO, mitochondrial (Mus musculus (Mouse)).